The chain runs to 446 residues: CBL-interacting serine/threonine-protein kinase 24 (446 aa).

Residues 11–264 (YEVGRTIGEG…IQGIKKDPWF (254 aa)) enclose the Protein kinase domain. ATP contacts are provided by residues 17 to 25 (IGEGTFAKV) and Lys-40. Asp-134 acts as the Proton acceptor in catalysis. The interval 152–179 (DFGLSALPQEGVELLRTTCGTPNYVAPE) is activation loop. A Phosphoserine modification is found at Ser-156. Thr-168 is subject to Phosphothreonine. Positions 305 to 329 (EGPLMMNAFEMITLSQGLNLSALFD) constitute an NAF domain. The interval 336–365 (KRQTRFVSRREPSEIIANIEAVANSMGFKS) is PPI.

This sequence belongs to the protein kinase superfamily. CAMK Ser/Thr protein kinase family. SNF1 subfamily. In terms of assembly, interacts with CBL1, CBL2, CBL4/SOS3, CBL5, CBL9, CBL10 and with the protein phosphatase 2C ABI2. It depends on Mn(2+) as a cofactor. Autophosphorylated.

Its subcellular location is the cytoplasm. The protein localises to the nucleus. The enzyme catalyses L-seryl-[protein] + ATP = O-phospho-L-seryl-[protein] + ADP + H(+). The catalysed reaction is L-threonyl-[protein] + ATP = O-phospho-L-threonyl-[protein] + ADP + H(+). Involved in the regulatory pathway for the control of intracellular Na(+) and K(+) homeostasis and salt tolerance. Activates the vacuolar H(+)/Ca(2+) antiporter CAX1 and operates in synergy with CBL4/SOS3 to activate the plasma membrane Na(+)/H(+) antiporter SOS1. CIPK serine-threonine protein kinases interact with CBL proteins. Binding of a CBL protein to the regulatory NAF domain of CIPK protein lead to the activation of the kinase in a calcium-dependent manner. Phosphorylates CBL1, CBL4 and CBL10. The sequence is that of CBL-interacting serine/threonine-protein kinase 24 (CIPK24) from Arabidopsis thaliana (Mouse-ear cress).